The following is a 604-amino-acid chain: uncharacterized protein (604 aa).

The signal sequence occupies residues Met-1 to Ala-19.

The protein to H.influenzae HbpA.

This is an uncharacterized protein from Escherichia coli (strain K12).